A 366-amino-acid chain; its full sequence is Cobalt-precorrin-5B C(1)-methyltransferase (366 aa).

Belongs to the CbiD family.

It catalyses the reaction Co-precorrin-5B + S-adenosyl-L-methionine = Co-precorrin-6A + S-adenosyl-L-homocysteine. The protein operates within cofactor biosynthesis; adenosylcobalamin biosynthesis; cob(II)yrinate a,c-diamide from sirohydrochlorin (anaerobic route): step 6/10. In terms of biological role, catalyzes the methylation of C-1 in cobalt-precorrin-5B to form cobalt-precorrin-6A. In Pseudomonas aeruginosa (strain UCBPP-PA14), this protein is Cobalt-precorrin-5B C(1)-methyltransferase.